Here is a 1275-residue protein sequence, read N- to C-terminus: MSKSLKKKSHWTSKVHESVIGRNPEGQLGFELKGGAENGQFPYLGEVKPGKVAYESGSKLVSEELLLEVNETPVAGLTIRDVLAVIKHCKDPLRLKCVKQGGIVDKDLRHYLNLRFQKGSVDHELQQIIRDNLYLRTVPCTTRPHKEGEVPGVDYIFITVEEFMELEKSGALLESGTYEDNYYGTPKPPAEPAPLLNVTDQILPGATPSAEGKRKRNKSVTNMEKASIEPPEEEEEERPVVNGNGVVITPESSEHEDKSAGASGETPSQPYPAPVYSQPEELKDQMDDTKPTKPEENEDSDPLPDNWEMAYTEKGEVYFIDHNTKTTSWLDPRLAKKAKPPEECKENELPYGWEKIDDPIYGTYYVDHINRRTQFENPVLEAKRKLQQHNMPHTELGAKPLQAPGFREKPLFTRDASQLKGTFLSTTLKKSNMGFGFTIIGGDEPDEFLQVKSVIPDGPAAQDGKMETGDVIVYINEVCVLGHTHADVVKLFQSVPIGQSVNLVLCRGYPLPFDPEDPANSMVPPLAIMERPPPVMVNGRHNYETYLEYISRTSQSVPDITDRPPHSLHSMPADGQLDGTYPPPVHDDNVSMASSGATQAELMTLTIVKGAQGFGFTIADSPTGQRVKQILDIQGCPGLCEGDLIVEINQQNVQNLSHTEVVDILKDCPVGSETSLIIHRGGFFSPWKTPKPMMDRWENQGSPQTSLSAPAVPQNLPFPPALHRSSFPDSTEAFDPRKPDPYELYEKSRAIYESRQQVPPRTSFRMDSSGPDYKELDVHLRRMESGFGFRILGGDEPGQPILIGAVIAMGSADRDGRLHPGDELVYVDGIPVAGKTHRYVIDLMHHAARNGQVNLTVRRKVLCGGEPCPENGRSPGSVSTHHSSPRSDYATYSNSNHAAPSSNASPPEGFASHSLQTSDVVIHRKENEGFGFVIISSLNRPESGATITVPHKIGRIIDGSPADRCAKLKVGDRILAVNGQSIINMPHADIVKLIKDAGLSVTLRIIPQEELNSPTSAPSSEKQSPMAQQHSPLAQQSPLAQPSPATPNSPVAQPAPPQPLQLQGHENSYRSEVKARQDVKPDIRQPPFTDYRQPPLDYRQPPGGDYSQPPPLDYRQHSPDTRQYPLSDYRQPQDFDYFTVDMEKGAKGFGFSIRGGREYKMDLYVLRLAEDGPAIRNGRMRVGDQIIEINGESTRDMTHARAIELIKSGGRRVRLLLKRGTGQVPEYGMVPSSLSMCMKSDKHGSPYFYLLGHPKDTTNPTPGVLPLPPPQACRK.

Residues 17-101 (ESVIGRNPEG…PLRLKCVKQG (85 aa)) enclose the PDZ 1 domain. Residues 109 to 283 (RHYLNLRFQK…PVYSQPEELK (175 aa)) form the Guanylate kinase-like domain. Residues 203 to 305 (LPGATPSAEG…ENEDSDPLPD (103 aa)) are disordered. Basic and acidic residues predominate over residues 280–295 (EELKDQMDDTKPTKPE). WW domains lie at 301-334 (DPLP…DPRL) and 347-380 (NELP…NPVL). The interval 301-380 (DPLPDNWEMA…RRTQFENPVL (80 aa)) is interaction with DDN. Y361 carries the phosphotyrosine modification. 2 consecutive PDZ domains span residues 425 to 509 (STTL…CRGY) and 604 to 682 (TLTI…HRGG). Residue S685 is modified to Phosphoserine. Positions 698-740 (ENQGSPQTSLSAPAVPQNLPFPPALHRSSFPDSTEAFDPRKPD) are disordered. Residues 699–708 (NQGSPQTSLS) are compositionally biased toward polar residues. In terms of domain architecture, PDZ 4 spans 777-859 (DVHLRRMESG…NGQVNLTVRR (83 aa)). Y826 is subject to Phosphotyrosine. A disordered region spans residues 868–912 (CPENGRSPGSVSTHHSSPRSDYATYSNSNHAAPSSNASPPEGFAS). A phosphoserine mark is found at S883 and S884. A compositionally biased stretch (low complexity) spans 893–907 (SNSNHAAPSSNASPP). The region spanning 919–1009 (DVVIHRKENE…SVTLRIIPQE (91 aa)) is the PDZ 5 domain. Over residues 1010–1040 (ELNSPTSAPSSEKQSPMAQQHSPLAQQSPLA) the composition is skewed to polar residues. The tract at residues 1010-1128 (ELNSPTSAPS…PDTRQYPLSD (119 aa)) is disordered. S1013 carries the phosphoserine modification. A compositionally biased stretch (basic and acidic residues) spans 1067–1083 (NSYRSEVKARQDVKPDI). Residues 1139–1221 (TVDMEKGAKG…RVRLLLKRGT (83 aa)) form the PDZ 6 domain.

The protein belongs to the MAGUK family. Interacts (via its WW domains) with DRPLA. Interacts (via its second PDZ domain) with PTEN (via unphosphorylated C-terminus); this interaction diminishes the degradation rate of PTEN. Interacts (via guanylate kinase domain) with DLGAP1. Interacts (via the PDZ domains) with GRIN2A, GRID2 and NLGN1. Interacts with CTNND2, CTNNB1 and MAGUIN-1. Interacts with ACVR2A, SMAD2 and SMAD3. Part of a complex consisting of MAGI2/ARIP1, ACVR2A, ACVR1B and SMAD3. May interact with HTR2A. Interacts with RAPGEF2. Identified in a complex with ACTN4, CASK, IQGAP1, NPHS1, SPTAN1 and SPTBN1. Interacts with DDN. Found in a complex, at least composed of KIDINS220, MAGI2, NTRK1 and RAPGEF2; the complex is mainly formed at late endosomes in a NGF-dependent manner. Interacts with RAPGEF2; the interaction occurs before or after nerve growth factor (NGF) stimulation. Interacts (via PDZ domain) with KIDINS220 (via C-terminal domain). Interacts with IGSF9 and HTR4. Interacts with DLL1. Found in a complex with IGSF9B and NLGN2; the interaction with IGSF9B is mediated via the PDZ 5 and PDZ 6 domains, while the interaction with NLGN2 is mediated via the WW1, WW2 and PDZ2 domains. Interacts (via PDZ 6 domain) with USH1G (via SAM domain); the interaction is triggered by phosphorylation of USH1G by CK2 and negatively regulates MAGI2-mediated endocytosis. In terms of tissue distribution, expressed throughout the retina except in the nuclear layers and the photoreceptor outer segments (at protein level). Highest retinal expression is observed in the outer plexiform layer, the outer limiting membrane and the inner segment of photoreceptor cells (at protein level). Expressed in brain.

The protein resides in the cytoplasm. Its subcellular location is the late endosome. The protein localises to the synapse. It localises to the synaptosome. It is found in the cell membrane. The protein resides in the cytoskeleton. Its subcellular location is the microtubule organizing center. The protein localises to the centrosome. It localises to the cell projection. It is found in the cilium. The protein resides in the centriole. Its subcellular location is the photoreceptor inner segment. The protein localises to the photoreceptor outer segment. In terms of biological role, seems to act as a scaffold molecule at synaptic junctions by assembling neurotransmitter receptors and cell adhesion proteins. Plays a role in nerve growth factor (NGF)-induced recruitment of RAPGEF2 to late endosomes and neurite outgrowth. May play a role in regulating activin-mediated signaling in neuronal cells. Enhances the ability of PTEN to suppress AKT1 activation. Plays a role in receptor-mediated clathrin-dependent endocytosis which is required for ciliogenesis. This Mus musculus (Mouse) protein is Membrane-associated guanylate kinase, WW and PDZ domain-containing protein 2 (Magi2).